The primary structure comprises 551 residues: Chitinase (551 aa).

A signal peptide spans 1–17 (MLYKLLNVLWLVAVSNA). Residues 1-149 (MLYKLLNVLW…NKPGRREDKI (149 aa)) form a chitin binding domain (CBD) region. Residues 148-548 (KIVAAYFVEW…NAINAQFKPK (401 aa)) enclose the GH18 domain. An N-linked (GlcNAc...) asparagine; by host glycan is attached at Asn-173. Catalysis depends on Glu-305, which acts as the Proton donor. An N-linked (GlcNAc...) asparagine; by host glycan is attached at Asn-444. The Prevents secretion from ER motif lies at 548-551 (KDEL).

It belongs to the glycosyl hydrolase 18 family. Chitinase class II subfamily. Interacts with host VCATH.

The protein resides in the host endoplasmic reticulum lumen. The enzyme catalyses Random endo-hydrolysis of N-acetyl-beta-D-glucosaminide (1-&gt;4)-beta-linkages in chitin and chitodextrins.. Plays a role in host liquefaction to facilitate horizontal transmission of the virus by hydrolyzing beta-chitin and by regulating the cysteine protease VCATH. Localized in the host reticulum endoplasmic via its KDEL motif, interacts with and thus prevents VCATH secretion before host cell lysis occurs. In Lepidoptera (butterflies and moths), this protein is Chitinase (CHIA).